Reading from the N-terminus, the 813-residue chain is G-type lectin S-receptor-like serine/threonine-protein kinase LECRK1 (813 aa).

The signal sequence occupies residues 1–19 (MVALLLFPMLLQLLSPTCA). The Extracellular segment spans residues 20 to 466 (QTQKNITLGS…NRKHWVLGSS (447 aa)). The 128-residue stretch at 22-149 (QKNITLGSTL…DGTTKWQTFD (128 aa)) folds into the Bulb-type lectin domain. N-linked (GlcNAc...) asparagine glycosylation is found at asparagine 24, asparagine 57, asparagine 164, asparagine 168, asparagine 219, and asparagine 242. Positions 293–346 (PQNICHAIVSDVGSGVCGFNSYCTFDGTRNQIASCQCPPWYKFFDEQKKYKGCK) constitute an EGF-like; atypical domain. Cystine bridges form between cysteine 297/cysteine 315, cysteine 309/cysteine 327, cysteine 329/cysteine 345, cysteine 391/cysteine 413, and cysteine 395/cysteine 401. Positions 354–433 (CDLDEATALA…NMADYVQRTV (80 aa)) constitute a PAN domain. N-linked (GlcNAc...) asparagine glycans are attached at residues asparagine 407 and asparagine 441. Residues 467–487 (LILGTSILVNFALISIFLFGT) form a helical membrane-spanning segment. Topologically, residues 488–813 (YCRIATKKNI…DPCSFISSLP (326 aa)) are cytoplasmic. A Protein kinase domain is found at 523 to 797 (AGFHEILGAG…KVTQMLDGAV (275 aa)). ATP-binding positions include 529–537 (LGAGASGVV) and lysine 553. Aspartate 647 (proton acceptor) is an active-site residue.

It belongs to the protein kinase superfamily. Ser/Thr protein kinase family.

It is found in the membrane. The catalysed reaction is L-seryl-[protein] + ATP = O-phospho-L-seryl-[protein] + ADP + H(+). The enzyme catalyses L-threonyl-[protein] + ATP = O-phospho-L-threonyl-[protein] + ADP + H(+). Involved in innate immunity. Required for the expression of defense-related genes PR1A, LOX2 and CHS1 upon biotic stresses. Required for basal resistance to the fungal blast (M.grisea), bacterial blight (X.oryzae pv. oryzae, Xoo) and the herbivorous insect brown planthopper (N.lugens, BPH). May be involved in several defense signaling pathways. Involved in the promotion of seed germination. Required for the expression of alpha-amylase genes during seed germination. Involved in resistance against the herbivorous insect brown planthopper (N.lugens, BPH). Member of the BPH3 (BPH resistance locus 3) cluster which contains LECRK1, LECRK2 and LECRK3. The protein is G-type lectin S-receptor-like serine/threonine-protein kinase LECRK1 of Oryza sativa subsp. japonica (Rice).